The sequence spans 244 residues: 5-oxoprolinase subunit A (244 aa).

This sequence belongs to the LamB/PxpA family. In terms of assembly, forms a complex composed of PxpA, PxpB and PxpC.

It catalyses the reaction 5-oxo-L-proline + ATP + 2 H2O = L-glutamate + ADP + phosphate + H(+). Its function is as follows. Catalyzes the cleavage of 5-oxoproline to form L-glutamate coupled to the hydrolysis of ATP to ADP and inorganic phosphate. The chain is 5-oxoprolinase subunit A from Salmonella typhi.